We begin with the raw amino-acid sequence, 536 residues long: Lariat debranching enzyme (536 aa).

Positions 8, 10, 39, and 84 each coordinate a divalent metal cation. A lariat recognition loop region spans residues 124 to 154 (SGIFKSHDYRKGHFECPPYNQQTIRSAYHVR). Positions 174, 226, and 228 each coordinate a divalent metal cation. Residues 388–536 (EEGSVRGEYE…YAAEDEDEAK (149 aa)) form a disordered region. Polar residues predominate over residues 414-426 (EYNTDNSGLSSIN). Residues 430-441 (IMLDDEGGDEDL) show a composition bias toward acidic residues. Over residues 484-504 (ELEKSGVNKQVEEKSLNERPL) the composition is skewed to basic and acidic residues.

It belongs to the lariat debranching enzyme family. Fe(2+) is required as a cofactor. It depends on Zn(2+) as a cofactor. The cofactor is Mn(2+).

Its subcellular location is the nucleus. With respect to regulation, active in presence of diverse metals including Fe(2+), Zn(2+), Mn(2+). Also activated by Ca(2+). Binds two metal cations in two adjacent alpha and beta metal-binding pockets. In terms of biological role, cleaves the 2'-5' phosphodiester linkage at the branch point of excised lariat intron RNA and converts them into linear molecules that can be subsequently degraded, thereby facilitating ribonucleotide turnover. Linked to its role in pre-mRNA processing mechanism, may also participate in retrovirus replication and have an antiviral cell-intrinsic defense function. The sequence is that of Lariat debranching enzyme (DBR1) from Gallus gallus (Chicken).